An 86-amino-acid chain; its full sequence is MDPYKVIIRPLVTEKAVSLIEKENKLTFIVDRKATKQDIKRAVEEMFNVKVEKVNTLITMKGEKKAYVKLRPEYNASEIAARLGLF.

This sequence belongs to the universal ribosomal protein uL23 family. In terms of assembly, part of the 50S ribosomal subunit. Contacts protein L29.

Its function is as follows. Binds to 23S rRNA. One of the proteins that surrounds the polypeptide exit tunnel on the outside of the ribosome. The polypeptide is Large ribosomal subunit protein uL23 (Thermococcus gammatolerans (strain DSM 15229 / JCM 11827 / EJ3)).